We begin with the raw amino-acid sequence, 242 residues long: uncharacterized protein (242 aa).

This is an uncharacterized protein from Aquifex aeolicus (strain VF5).